A 762-amino-acid chain; its full sequence is MASNERDAISWYQKKIGAYDQQIWEKSIEQTQIKGLKNKPKKMGHIKPDLIDVDLIRGSTFAKAKPEIPWTSLTRKGLVRVVFFPLFSNWWIQVTSLRIFVWLLLLYFMQVIAIVLYLMMPIVNISEVLGPLCLMLLMGTVHCQIVSTQITRPSGNNGNRRRRKLRKTVNGDGSRENGNNSSDKVRGIETLESVPIIGGFWETIFGNRIKRVKLISNKGTETDNDPSCVHPIIKRRQCRPEIRMWQTREKAKFSDGEKCRREAFRRLGNGVSDDLSSEEDGEARTQMILLRRSVEGASSDNGCEVKNRKSILSRHLNSQVKKTTTRWCHIVRDSDSLAESEFESAAFSQGSRSGVSGGSRSLNMSRRDSESTRHDSETEDMLWDDLLHGPECRSSVTSDSEGAHVNTLHSGTKRDPKEDVFQQNHLFWLQNSSPSSDRVSAIIWEGNECKKMDMSVLEISGIIMSRVNAYQQGVGYQMLGNVVTIGLAFFPFLHRLFREKSLDQLKSISAEEILTLFCGAPPVTPIIVLSIINFFERLCLTWMFFFMMCVAERTYKQRFLFAKLFSHITSARKARKYEIPHFRLKKVENIKIWLSLRSYLKRRGPQRSVDVVVSSVFLLTLSIAFICCAQVLQGHKTFLNDAYNWEFLIWETALLLFLLRLASLGSETNKKYSNVSILLTEQINLYLKMEKKPNKKEQLTLVNNVLKLSTKLLKELDTPFRLYGLTMNPLIYNITRVVILSAVSGVISDLLGFNIRLWKIKS.

Residues 6 to 150 (RDAISWYQKK…VHCQIVSTQI (145 aa)) form the PHTF domain. The next 3 helical transmembrane spans lie at 77-97 (GLVR…VTSL), 99-119 (IFVW…LYLM), and 121-141 (PIVN…MGTV). The interval 152–184 (RPSGNNGNRRRRKLRKTVNGDGSRENGNNSSDK) is disordered. 2 N-linked (GlcNAc...) asparagine glycosylation sites follow: Asn-179 and Asn-180. Phosphoserine occurs at positions 272, 276, 277, 334, and 336. 2 disordered regions span residues 344-380 (SAAF…ETED) and 393-415 (RSSV…TKRD). Low complexity predominate over residues 348–361 (SQGSRSGVSGGSRS). A glycan (N-linked (GlcNAc...) asparagine) is linked at Asn-363. The segment covering 365 to 376 (SRRDSESTRHDS) has biased composition (basic and acidic residues). N-linked (GlcNAc...) asparagine glycosylation is present at Asn-431. The next 4 helical transmembrane spans lie at 473–493 (GVGY…FPFL), 512–532 (EILT…LSII), 611–631 (VVVS…CAQV), and 645–665 (WEFL…ASLG). Residues Asn-674 and Asn-733 are each glycosylated (N-linked (GlcNAc...) asparagine). A helical membrane pass occupies residues 737–757 (VVILSAVSGVISDLLGFNIRL).

In terms of assembly, interacts with FEM1B. Widely expressed with highest levels in testis.

Its subcellular location is the endoplasmic reticulum membrane. The protein localises to the golgi apparatus. It is found in the cis-Golgi network membrane. In Homo sapiens (Human), this protein is Protein PHTF1.